The primary structure comprises 353 residues: (-)-beta-caryophyllene synthase ((2E,6E)-farnesyl diphosphate cyclizing) (353 aa).

Asp-85 and Asp-89 together coordinate Mg(2+). The DDXXD motif motif lies at 85–89 (DDQFD). Arg-179 contacts substrate. 2 residues coordinate Mg(2+): Asn-225 and Ser-229. A substrate-binding site is contributed by Lys-232. Mg(2+) is bound at residue Glu-233. 320-321 (RF) lines the substrate pocket.

Belongs to the terpene synthase family. It depends on Mg(2+) as a cofactor.

The catalysed reaction is (2E,6E)-farnesyl diphosphate = (-)-(E)-beta-caryophyllene + diphosphate. The protein operates within secondary metabolite biosynthesis; terpenoid biosynthesis. Catalyzes the conversion of (2E,6E)-farnesyl diphosphate (FPP) to yield the bicyclic sesquiterpene (2S,10R)-(-)-(E)-beta-caryophyllene via a probable 1,10-cyclization, which could involve the abstraction of the pyrophosphate from FPP to yield a (E,E)-germacradienyl cation. This Saccharothrix espanaensis (strain ATCC 51144 / DSM 44229 / JCM 9112 / NBRC 15066 / NRRL 15764) protein is (-)-beta-caryophyllene synthase ((2E,6E)-farnesyl diphosphate cyclizing) (ptlA).